Here is a 173-residue protein sequence, read N- to C-terminus: MKALDFDKYIRVIDDFPKPGISFKDITTLLKDGEAYRAAVDAIVERVRESQPDLIVGPEARGFLLGAPVAYALGIGFVPVRKPGKLPGKTVSETYELEYGSDTLEVHADAIQPGQRIAIVDDLLATGGTTSATARLIEKTGAQVAGMSFLIELGFLEGRKRLEGYEVFSLIKY.

Belongs to the purine/pyrimidine phosphoribosyltransferase family. Homodimer.

It is found in the cytoplasm. It catalyses the reaction AMP + diphosphate = 5-phospho-alpha-D-ribose 1-diphosphate + adenine. It participates in purine metabolism; AMP biosynthesis via salvage pathway; AMP from adenine: step 1/1. Its function is as follows. Catalyzes a salvage reaction resulting in the formation of AMP, that is energically less costly than de novo synthesis. This is Adenine phosphoribosyltransferase from Desulfitobacterium hafniense (strain Y51).